The chain runs to 382 residues: Guanylate kinase 1 (382 aa).

Residues 128–310 enclose the Guanylate kinase-like domain; it reads QKPIVISGPS…CYENLKKLLS (183 aa). 135-142 is a binding site for ATP; it reads GPSGVGKG. Residues Arg168, Arg261, and Arg272 contribute to the active site. The ATP site is built by Asn295 and Asp296.

The protein belongs to the guanylate kinase family. As to quaternary structure, monomer.

The protein localises to the cytoplasm. It is found in the nucleus. It catalyses the reaction GMP + ATP = GDP + ADP. Its function is as follows. Essential for recycling GMP and indirectly, cGMP. This chain is Guanylate kinase 1 (GK1), found in Oryza sativa subsp. japonica (Rice).